Here is a 599-residue protein sequence, read N- to C-terminus: Stromal 70 kDa heat shock-related protein, chloroplastic (599 aa).

The disordered stretch occupies residues 545 to 573 (NQPGAGGEPGAAQAQHQEQSSARQIQRAK). The segment covering 554–568 (GAAQAQHQEQSSARQ) has biased composition (low complexity).

The protein belongs to the heat shock protein 70 family.

Its subcellular location is the plastid. It localises to the chloroplast stroma. Its function is as follows. Interacts with newly imported chloroplast proteins to assist in their maturation. This is Stromal 70 kDa heat shock-related protein, chloroplastic (CHSP70) from Spinacia oleracea (Spinach).